A 510-amino-acid chain; its full sequence is Histidine ammonia-lyase (510 aa).

A cross-link (5-imidazolinone (Ala-Gly)) is located at residues 143–145 (ASG). The residue at position 144 (Ser-144) is a 2,3-didehydroalanine (Ser).

It belongs to the PAL/histidase family. In terms of processing, contains an active site 4-methylidene-imidazol-5-one (MIO), which is formed autocatalytically by cyclization and dehydration of residues Ala-Ser-Gly.

It localises to the cytoplasm. It catalyses the reaction L-histidine = trans-urocanate + NH4(+). Its pathway is amino-acid degradation; L-histidine degradation into L-glutamate; N-formimidoyl-L-glutamate from L-histidine: step 1/3. The sequence is that of Histidine ammonia-lyase from Aliivibrio fischeri (strain ATCC 700601 / ES114) (Vibrio fischeri).